We begin with the raw amino-acid sequence, 279 residues long: Phosphonates import ATP-binding protein PhnC 2 (279 aa).

Residues leucine 10–serine 253 enclose the ABC transporter domain. Glycine 43–serine 50 serves as a coordination point for ATP. A compositionally biased stretch (low complexity) spans serine 253–threonine 262. The disordered stretch occupies residues serine 253–cysteine 279. Residues aspartate 263–cysteine 279 are compositionally biased toward polar residues.

The protein belongs to the ABC transporter superfamily. Phosphonates importer (TC 3.A.1.9.1) family. In terms of assembly, the complex is composed of two ATP-binding proteins (PhnC), two transmembrane proteins (PhnE) and a solute-binding protein (PhnD).

It localises to the cell inner membrane. The enzyme catalyses phosphonate(out) + ATP + H2O = phosphonate(in) + ADP + phosphate + H(+). In terms of biological role, part of the ABC transporter complex PhnCDE involved in phosphonates import. Responsible for energy coupling to the transport system. This Cupriavidus metallidurans (strain ATCC 43123 / DSM 2839 / NBRC 102507 / CH34) (Ralstonia metallidurans) protein is Phosphonates import ATP-binding protein PhnC 2.